A 210-amino-acid polypeptide reads, in one-letter code: Chloramphenicol acetyltransferase (210 aa).

The active site involves His-79.

It belongs to the transferase hexapeptide repeat family.

The catalysed reaction is chloramphenicol + acetyl-CoA = chloramphenicol 3-acetate + CoA. In terms of biological role, this enzyme is an effector of chloramphenicol resistance in bacteria. This Morganella morganii (Proteus morganii) protein is Chloramphenicol acetyltransferase (cat).